A 228-amino-acid polypeptide reads, in one-letter code: MTLPARPEPITLKPSETAVVVVDMQNAYSTEGGYVDLAGFDISGAKGTIANIKKTLDAARAAGVQVIYFQNGWDKDYVEAGGPGSPNWHKSNALKTMRKRPELQGQLLAKGTWDYAIVDELQPQPGDILVPKTRYSGFFNTNMDSVLRARGIRNLVFVGIATNVCVESSLRDAFHLEYFGVMLEDATHHLGPDFIQQATVYNVEKFFGWVATVNDFCGVISQAAPVTD.

Residue Asp23 is the Proton acceptor of the active site. Lys132 is an active-site residue. The active-site Nucleophile is the Cys165.

The protein belongs to the isochorismatase family. RutB subfamily.

It catalyses the reaction (Z)-3-ureidoacrylate + H2O + H(+) = (Z)-3-aminoacrylate + NH4(+) + CO2. The enzyme catalyses (Z)-3-ureidoacrylate + H2O = (Z)-3-aminoacrylate + carbamate + H(+). It carries out the reaction (Z)-2-methylureidoacrylate + H2O + H(+) = (Z)-2-methylaminoacrylate + NH4(+) + CO2. Functionally, hydrolyzes ureidoacrylate to form aminoacrylate and carbamate. The carbamate hydrolyzes spontaneously, thereby releasing one of the nitrogen atoms of the pyrimidine ring as ammonia and one of its carbon atoms as CO2. The sequence is that of Ureidoacrylate amidohydrolase RutB from Agrobacterium fabrum (strain C58 / ATCC 33970) (Agrobacterium tumefaciens (strain C58)).